We begin with the raw amino-acid sequence, 647 residues long: MLWCPSVLVPLIAVAACLPVLAIGTPLEWEFAITLKSKILFVDEFWRTLASAAHEFDELSALTFDETEELIYFNDQQHRNGSIFSLRRDALMASHIAEQAIQRTGNESVGGLAYDPLNRNLFWSDTLQKKIFFASIDSKVTETPKVLVDLSQEGARPDGVAVDVCRRKLYWTNSNITHPTVESIDLAGTNRQVIIDTDIDMPRGIVVDQLSDRIFWIDDLKGVFFALKSARLDGSDRQLVLHDKHHEPLNLAVTNDAIYWTDKTTKAVWSHPKVPIVKATTTTSPVKAEEEDATETIPDIEPEPVAEVSALLRVANLSEEARGIVARTGFYQRLQKDEHCANIVRKVKERLDLMTKKKQMRSLVDEKTAQLERDHCLNGGTYIADRVLCICPTGFKGSRCEIRECHNFCVHGTCEISDRAYPKCYCQPGFSGERCEISKCSGLCLNGGHCKLEDISEKPSCECPHNFAGERCEQNSTEICALFCRLLKHEADIYVPFGCHDICEELAKDASDKIAIPQYHHLEVCMTPSPWTSNVIIVLVLGIVSCFFLVAVIVHGFRRLYKPKRPRIRKTFVVRKQARTNSSGDTPLTNRPLATEQCEITIENCCNMNICETPCFDPKLVEQTLAKSSNCKEDKKILIHNMDDDLY.

The N-terminal stretch at 1–22 is a signal peptide; sequence MLWCPSVLVPLIAVAACLPVLA. Over 23–534 the chain is Extracellular; sequence IGTPLEWEFA…CMTPSPWTSN (512 aa). Asn-80 and Asn-106 each carry an N-linked (GlcNAc...) asparagine glycan. LDL-receptor class B repeat units lie at residues 119–166, 167–211, and 212–257; these read RNLF…DVCR, RKLY…DQLS, and DRIF…TNDA. Asn-175 carries N-linked (GlcNAc...) asparagine glycosylation. The N-linked (GlcNAc...) asparagine glycan is linked to Asn-316. 2 EGF-like domains span residues 365–401 and 436–473; these read DEKTAQLERDHCLNGGTYIADRVLCICPTGFKGSRCE and EISKCSGLCLNGGHCKLEDISEKPSCECPHNFAGERCE. 5 disulfide bridges follow: Cys-376–Cys-389, Cys-391–Cys-400, Cys-440–Cys-450, Cys-444–Cys-461, and Cys-463–Cys-472. Asn-475 carries N-linked (GlcNAc...) asparagine glycosylation. The chain crosses the membrane as a helical span at residues 535 to 555; that stretch reads VIIVLVLGIVSCFFLVAVIVH. The Cytoplasmic portion of the chain corresponds to 556–647; it reads GFRRLYKPKR…LIHNMDDDLY (92 aa).

It belongs to the cueball family.

Its subcellular location is the cell membrane. In terms of biological role, has a role in spermatogenesis and oogenesis. The chain is Protein cueball from Drosophila persimilis (Fruit fly).